Here is a 486-residue protein sequence, read N- to C-terminus: G2/mitotic-specific cyclin-4 (486 aa).

Disordered stretches follow at residues 1–80 (MRSY…SSNK) and 105–126 (VLLN…DKEN). Positions 25-41 (ANLSSNHTTAGQPSTSS) are enriched in polar residues. A compositionally biased stretch (acidic residues) spans 108-123 (NDDDDETDDEFDDEED). Positions 122–184 (EDKENRYHDL…QSHTQDMRSI (63 aa)) form a coiled coil. Residues 234 to 359 (EIFNYLHELE…FMIDVLEFDL (126 aa)) enclose the Cyclin N-terminal domain.

It belongs to the cyclin family. Cyclin AB subfamily. As to quaternary structure, interacts with IQG1.

Its function is as follows. 2/mitotic-specific cyclin essential for the control of the cell cycle at the G2/M (mitosis) transition. G2/M cyclins accumulate steadily during G2 and are abruptly destroyed at mitosis. Degradation is necessary for the cell to exit from mitosis. Plays a role in morphogenesis by negatively regulating polarized growth. Through binding to CDC28 regulates cytokinesis, partly by phosphorylation of the actomyosin ring component IQG1. This is G2/mitotic-specific cyclin-4 (CLB4) from Candida albicans (strain SC5314 / ATCC MYA-2876) (Yeast).